A 261-amino-acid chain; its full sequence is MENFSLLSISGPPISSSALSAFPDIMFSRATSLPDIAKTAVPTEASSPAQALPPQYQSIIVRQGIQNTALSPDCSLGDTQHGEKLRRNCTIYRPWFSPYSYFVCADKESQLEAYDFPEVQQDEGKWDNCLSEDMAENICSSSSSPENTCPREATKKSRHGLDSITSQDILMASRWHPAQQNGYKCVACCRMYPTLDFLKSHIKRGFREGFSCKVYYRKLKALWSKEQKARLGDRLSSGSCQAFNSPAEHLRQIGGEAYLCL.

Residues 140–159 (SSSSSPENTCPREATKKSRH) are disordered.

In terms of tissue distribution, testis-specific.

The protein resides in the nucleus membrane. Its function is as follows. Plays a role in spermiogenesis and fertilization. The chain is Spermatogenesis-associated protein 46 from Homo sapiens (Human).